Here is a 105-residue protein sequence, read N- to C-terminus: Large ribosomal subunit protein uL24 (105 aa).

The interval 40–61 is disordered; it reads RIKKHTPQSANERGASSGGIVT.

This sequence belongs to the universal ribosomal protein uL24 family. In terms of assembly, part of the 50S ribosomal subunit.

Its function is as follows. One of two assembly initiator proteins, it binds directly to the 5'-end of the 23S rRNA, where it nucleates assembly of the 50S subunit. One of the proteins that surrounds the polypeptide exit tunnel on the outside of the subunit. The chain is Large ribosomal subunit protein uL24 from Mycobacteroides abscessus (strain ATCC 19977 / DSM 44196 / CCUG 20993 / CIP 104536 / JCM 13569 / NCTC 13031 / TMC 1543 / L948) (Mycobacterium abscessus).